We begin with the raw amino-acid sequence, 225 residues long: Protein-L-isoaspartate O-methyltransferase (225 aa).

S75 is an active-site residue.

It belongs to the methyltransferase superfamily. L-isoaspartyl/D-aspartyl protein methyltransferase family.

The protein localises to the cytoplasm. It catalyses the reaction [protein]-L-isoaspartate + S-adenosyl-L-methionine = [protein]-L-isoaspartate alpha-methyl ester + S-adenosyl-L-homocysteine. Catalyzes the methyl esterification of L-isoaspartyl residues in peptides and proteins that result from spontaneous decomposition of normal L-aspartyl and L-asparaginyl residues. It plays a role in the repair and/or degradation of damaged proteins. The sequence is that of Protein-L-isoaspartate O-methyltransferase from Xanthomonas axonopodis pv. citri (strain 306).